We begin with the raw amino-acid sequence, 359 residues long: Type-1 angiotensin II receptor (359 aa).

Residues 1 to 25 (MILNSSTEDGIKRIQDDCPKAGRHN) lie on the Extracellular side of the membrane. Residue N4 is glycosylated (N-linked (GlcNAc...) asparagine). Residues Q15 and D17 each coordinate angiotensin II. 2 disulfide bridges follow: C18–C274 and C101–C180. The chain crosses the membrane as a helical span at residues 26–55 (YIFVMIPTLYSIIFVVGIFGNSLVVIVIYF). Over 56–61 (YMKLKT) the chain is Cytoplasmic. A helical membrane pass occupies residues 62-89 (VASVFLLNLALADLCFLLTLPLWAVYTA). Topologically, residues 90-98 (MEYRWPFGN) are extracellular. Residues 99 to 125 (YLCKIASASVSFNLYASVFLLTCLSID) form a helical membrane-spanning segment. Residues 126-141 (RYLAIVHPMKSRLRRT) lie on the Cytoplasmic side of the membrane. The chain crosses the membrane as a helical span at residues 142 to 165 (MLVAKVTCIIIWLLAGLASLPAII). Residues 166–190 (HRNVFFIENTNITVCAFHYESQNST) are Extracellular-facing. R167 provides a ligand contact to angiotensin II. An N-linked (GlcNAc...) asparagine glycan is attached at N176. 3 residues coordinate angiotensin II: F182, H183, and Y184. The N-linked (GlcNAc...) asparagine glycan is linked to N188. The helical transmembrane segment at 191 to 216 (LPIGLGLTKNILGFLFPFLIILTSYT) threads the bilayer. Residue K199 participates in angiotensin II binding. Residues 217–239 (LIWKALKKAYEIQKNKPRNDDIF) are Cytoplasmic-facing. Residues 240-268 (KIIMAIVLFFFFSWIPHQIFTFLDVLIQL) form a helical membrane-spanning segment. Over 269–278 (GIIRDCRIAD) the chain is Extracellular. Residues 279-304 (IVDTAMPITICIAYFNNCLNPLFYGF) traverse the membrane as a helical segment. At 305–359 (LGKKFKKYFLQLLKYIPPKAKSHSNLSTKMSTLSYRPSDNVSSSTKKPAPCFEVE) the chain is on the cytoplasmic side. The segment covering 335–350 (STLSYRPSDNVSSSTK) has biased composition (polar residues). The interval 335–359 (STLSYRPSDNVSSSTKKPAPCFEVE) is disordered. The S-palmitoyl cysteine moiety is linked to residue C355.

Belongs to the G-protein coupled receptor 1 family. In terms of assembly, interacts with MAS1. Interacts with ARRB1. Interacts with FLNA (via filamin repeat 21); increases PKA-mediated phosphorylation of FLNA. Post-translationally, C-terminal Ser or Thr residues may be phosphorylated.

The protein localises to the cell membrane. Functionally, receptor for angiotensin II, a vasoconstricting peptide, which acts as a key regulator of blood pressure and sodium retention by the kidney. The activated receptor in turn couples to G-alpha proteins G(q) (GNAQ, GNA11, GNA14 or GNA15) and thus activates phospholipase C and increases the cytosolic Ca(2+) concentrations, which in turn triggers cellular responses such as stimulation of protein kinase C. The sequence is that of Type-1 angiotensin II receptor (AGTR1) from Pan troglodytes (Chimpanzee).